We begin with the raw amino-acid sequence, 435 residues long: Transcription activator ACTTR (435 aa).

Positions 16–43 form a DNA-binding region, zn(2)-C6 fungal-type; sequence CDFCTQSKLRCNKNKPSCRRCTIQQQPC. The disordered stretch occupies residues 48–89; it reads ARRTGRPPKRPRKANDGQEANEQHGDQDPVTSTPGGSCQQQS. The segment covering 50 to 59 has biased composition (basic residues); it reads RTGRPPKRPR. Positions 60–74 are enriched in basic and acidic residues; that stretch reads KANDGQEANEQHGDQ. Residues 76–89 are compositionally biased toward polar residues; it reads PVTSTPGGSCQQQS.

The protein resides in the nucleus. Functionally, transcription factor that regulates the expression of the gene clusters that mediate the biosynthesis of the host-selective toxins (HSTs) ACT-toxins responsible for brown spot of tangerine disease by the tangerine pathotype which affects tangerines and mandarins. ACT-toxins consist of three moieties, 9,10-epoxy-8-hydroxy-9-methyl-decatrienoic acid (EDA), valine and a polyketide. ACT-toxin I is toxic to both citrus and pear; toxin II the 5''-deoxy derivative of ACT-toxin I, is highly toxic to pear and slightly toxic to citrus. On cellular level, ACT-toxins affect plasma membrane of susceptible cells and cause a sudden increase in loss of K(+) after a few minutes of toxin treatment. This is Transcription activator ACTTR from Alternaria alternata (Alternaria rot fungus).